The chain runs to 482 residues: tRNA sulfurtransferase (482 aa).

A THUMP domain is found at 61 to 165; that stretch reads LAIRDALTRI…DDRLLLIKGR (105 aa). Residues 183–184, K265, G287, and Q296 each bind ATP; that span reads LI. Residues C344 and C456 are joined by a disulfide bond. Positions 404-482 constitute a Rhodanese domain; sequence FGPNDVILDI…GFNNVKVYRL (79 aa). Catalysis depends on C456, which acts as the Cysteine persulfide intermediate.

Belongs to the ThiI family.

The protein resides in the cytoplasm. It catalyses the reaction [ThiI sulfur-carrier protein]-S-sulfanyl-L-cysteine + a uridine in tRNA + 2 reduced [2Fe-2S]-[ferredoxin] + ATP + H(+) = [ThiI sulfur-carrier protein]-L-cysteine + a 4-thiouridine in tRNA + 2 oxidized [2Fe-2S]-[ferredoxin] + AMP + diphosphate. The catalysed reaction is [ThiS sulfur-carrier protein]-C-terminal Gly-Gly-AMP + S-sulfanyl-L-cysteinyl-[cysteine desulfurase] + AH2 = [ThiS sulfur-carrier protein]-C-terminal-Gly-aminoethanethioate + L-cysteinyl-[cysteine desulfurase] + A + AMP + 2 H(+). Its pathway is cofactor biosynthesis; thiamine diphosphate biosynthesis. Its function is as follows. Catalyzes the ATP-dependent transfer of a sulfur to tRNA to produce 4-thiouridine in position 8 of tRNAs, which functions as a near-UV photosensor. Also catalyzes the transfer of sulfur to the sulfur carrier protein ThiS, forming ThiS-thiocarboxylate. This is a step in the synthesis of thiazole, in the thiamine biosynthesis pathway. The sulfur is donated as persulfide by IscS. The sequence is that of tRNA sulfurtransferase from Shigella boydii serotype 18 (strain CDC 3083-94 / BS512).